The chain runs to 540 residues: 2,3-bisphosphoglycerate-independent phosphoglycerate mutase (540 aa).

Asp13 and Ser63 together coordinate Mn(2+). Catalysis depends on Ser63, which acts as the Phosphoserine intermediate. Substrate is bound by residues His124, Arg154–Asp155, Arg186, Arg192, Arg262–Arg265, and Lys356. Residues Asp423, His427, Asp464, His465, and His483 each coordinate Mn(2+).

It belongs to the BPG-independent phosphoglycerate mutase family. As to quaternary structure, monomer. Mn(2+) is required as a cofactor.

The catalysed reaction is (2R)-2-phosphoglycerate = (2R)-3-phosphoglycerate. The protein operates within carbohydrate degradation; glycolysis; pyruvate from D-glyceraldehyde 3-phosphate: step 3/5. Functionally, catalyzes the interconversion of 2-phosphoglycerate and 3-phosphoglycerate. The sequence is that of 2,3-bisphosphoglycerate-independent phosphoglycerate mutase from Chloroflexus aurantiacus (strain ATCC 29366 / DSM 635 / J-10-fl).